Consider the following 50-residue polypeptide: Monellin chain B (50 aa).

Heterodimer of an A chain and a B chain.

Functionally, taste-modifying protein; intensely sweet-tasting protein. In Dioscoreophyllum cumminsii (Serendipity berry), this protein is Monellin chain B.